A 590-amino-acid chain; its full sequence is MNKKIKEKLALLPDQPGCYLMKDRQDTVIYVGKAKILKNRVRSYFSGSHDAKTQRLVSEIEDFEYIVTSSNIEALILEMNLIKKYDPKYNVMLKDDKSYPFIKITNERHPKLVVTRKVKKDKGRYFGPYPNVQAARETKKLLDRLYPLRKCAKLPDRVCLYYHLGQCLAPCVYDVSEETNRQLTEEITRFLKGGYNEVKKELEAKMLEASENLQFERAKEFRDQIAHIESTMEKQKMMLNDMVDRDVFAYSYDKGWMCVQVFFIRQGKLIERDVSMFPLYREADEEFLTFIGQFYSKNNHFLPKEILVPDSVDKDMIEELLDVNVRQPKRGAKKDLLLLAHKNAKLALKEKFSLIERDEERTIGAIEKLGKALDIYTPYRIEAFDNSNIQGTDPVSAMVVFLDGKPHKKEYRKYKIKTVEGPDDYGSMREVIRRRYTRVLKENLPLPDLILIDGGKGQVSAALDVLENELGLDVPVAGLVKDDKHRTSNLLIGDPLEIVQLERNSQEFYLLQRIQDEVHRFAISFHRQLRGKSAFQSVLDGIPGVGEQRKKLLLKHFGSVKKMKEASAEDIRKLGIPLKTAQLIEEALKK.

One can recognise a GIY-YIG domain in the interval Asp14–Val91. Residues Asn196–Thr231 form the UVR domain.

This sequence belongs to the UvrC family. Interacts with UvrB in an incision complex.

It localises to the cytoplasm. Functionally, the UvrABC repair system catalyzes the recognition and processing of DNA lesions. UvrC both incises the 5' and 3' sides of the lesion. The N-terminal half is responsible for the 3' incision and the C-terminal half is responsible for the 5' incision. This chain is UvrABC system protein C, found in Bacillus licheniformis (strain ATCC 14580 / DSM 13 / JCM 2505 / CCUG 7422 / NBRC 12200 / NCIMB 9375 / NCTC 10341 / NRRL NRS-1264 / Gibson 46).